The following is a 168-amino-acid chain: Lipoprotein signal peptidase (168 aa).

3 helical membrane-spanning segments follow: residues 8–28, 70–90, and 104–124; these read TLLV…VVLL, KYFL…YLFF, and VLLC…GHIV. Catalysis depends on residues Asp125 and Asp143. Residues 134–154 traverse the membrane as a helical segment; sequence WAFPTFNVADVLISLGTLLLV.

Belongs to the peptidase A8 family.

Its subcellular location is the cell inner membrane. It catalyses the reaction Release of signal peptides from bacterial membrane prolipoproteins. Hydrolyzes -Xaa-Yaa-Zaa-|-(S,diacylglyceryl)Cys-, in which Xaa is hydrophobic (preferably Leu), and Yaa (Ala or Ser) and Zaa (Gly or Ala) have small, neutral side chains.. The protein operates within protein modification; lipoprotein biosynthesis (signal peptide cleavage). Functionally, this protein specifically catalyzes the removal of signal peptides from prolipoproteins. The sequence is that of Lipoprotein signal peptidase from Chlamydia pneumoniae (Chlamydophila pneumoniae).